Reading from the N-terminus, the 142-residue chain is Aspartate 1-decarboxylase (142 aa).

Ser25 functions as the Schiff-base intermediate with substrate; via pyruvic acid in the catalytic mechanism. Ser25 carries the post-translational modification Pyruvic acid (Ser). Position 57 (Thr57) interacts with substrate. Catalysis depends on Tyr58, which acts as the Proton donor. 73 to 75 (GAA) is a binding site for substrate.

Belongs to the PanD family. As to quaternary structure, heterooctamer of four alpha and four beta subunits. Pyruvate is required as a cofactor. Post-translationally, is synthesized initially as an inactive proenzyme, which is activated by self-cleavage at a specific serine bond to produce a beta-subunit with a hydroxyl group at its C-terminus and an alpha-subunit with a pyruvoyl group at its N-terminus.

The protein localises to the cytoplasm. It carries out the reaction L-aspartate + H(+) = beta-alanine + CO2. It functions in the pathway cofactor biosynthesis; (R)-pantothenate biosynthesis; beta-alanine from L-aspartate: step 1/1. Catalyzes the pyruvoyl-dependent decarboxylation of aspartate to produce beta-alanine. The protein is Aspartate 1-decarboxylase of Arthrobacter sp. (strain FB24).